The following is a 532-amino-acid chain: Muscarinic acetylcholine receptor M5 (532 aa).

Residues 1-29 lie on the Extracellular side of the membrane; that stretch reads MEGDSYGNATTINGTPVNHQPLERHRLWE. Asparagine 8 is a glycosylation site (N-linked (GlcNAc...) asparagine). Residues 30-53 traverse the membrane as a helical segment; it reads VITIAAVTAVVSLITIVGNVLVMI. At 54-66 the chain is on the cytoplasmic side; the sequence is SFKVNSQLKTVNN. The helical transmembrane segment at 67-87 threads the bilayer; sequence YYLLSLACADLIIGIFSMNLY. Residues 88-104 lie on the Extracellular side of the membrane; the sequence is TTYILMGRWALGSLACD. A helical membrane pass occupies residues 105–126; the sequence is LWLALDYVASNASVMNLLVISF. Residues 127 to 146 lie on the Cytoplasmic side of the membrane; that stretch reads DRYFSITRPLTYRAKRTPKR. Residues 147-169 form a helical membrane-spanning segment; sequence AGIMIGLAWLISFILWAPAILCW. Residues 170-191 lie on the Extracellular side of the membrane; the sequence is QYLVGKRTVPPDECQIQFLSEP. Residues 192–214 traverse the membrane as a helical segment; that stretch reads TITFGTAIAAFYIPVSVMTILYC. Topologically, residues 215-443 are cytoplasmic; sequence RIYRETEKRT…LVKERKAAQT (229 aa). Residues 263–294 form a disordered region; the sequence is QRERNQASRSSSHRSTSITGKPSQATGPSTNW. Over residues 270-279 the composition is skewed to low complexity; sequence SRSSSHRSTS. Over residues 280–294 the composition is skewed to polar residues; that stretch reads ITGKPSQATGPSTNW. The chain crosses the membrane as a helical span at residues 444–464; it reads LSAILLAFIITWTPYNIMVLV. The Extracellular portion of the chain corresponds to 465 to 478; it reads STFCDKCVPVALWH. Residues 479-498 form a helical membrane-spanning segment; sequence LGYWLCYVNSTVNPICYALC. At 499–532 the chain is on the cytoplasmic side; the sequence is NRTFRKTFKMLLLCQWKKKKVEEKLYWQGNSKLP. 2 positions are modified to phosphothreonine: threonine 501 and threonine 505.

This sequence belongs to the G-protein coupled receptor 1 family. Muscarinic acetylcholine receptor subfamily. CHRM5 sub-subfamily.

Its subcellular location is the cell membrane. The protein resides in the postsynaptic cell membrane. In terms of biological role, the muscarinic acetylcholine receptor mediates various cellular responses, including inhibition of adenylate cyclase, breakdown of phosphoinositides and modulation of potassium channels through the action of G proteins. Primary transducing effect is Pi turnover. The chain is Muscarinic acetylcholine receptor M5 (CHRM5) from Saimiri boliviensis boliviensis (Bolivian squirrel monkey).